The primary structure comprises 249 residues: General transcription factor IIF subunit 2 (249 aa).

Residue Ala2 is modified to N-acetylalanine. N6-acetyllysine is present on residues Lys22, Lys33, and Lys137. Ser142 is subject to Phosphoserine. 2 residues coordinate DNA: Gly227 and His229. Ser248 carries the post-translational modification Phosphoserine.

It belongs to the TFIIF beta subunit family. In terms of assembly, heterodimer of an alpha and a beta subunit. Interacts with HTATSF1 and GPBP1. Interacts with URI1. Interacts with GTF2B (via N-terminus); this interaction is inhibited in presence of GTF2F1. Part of TBP-based Pol II pre-initiation complex (PIC), in which Pol II core assembles with general transcription factors and other specific initiation factors including GTF2E1, GTF2E2, GTF2F1, GTF2F2, TCEA1, ERCC2, ERCC3, GTF2H2, GTF2H3, GTF2H4, GTF2H5, GTF2A1, GTF2A2, GTF2B and TBP; this large multi-subunit PIC complex mediates DNA unwinding and targets Pol II core to the transcription start site where the first phosphodiester bond forms.

It localises to the nucleus. In terms of biological role, TFIIF is a general transcription initiation factor that binds to RNA polymerase II and helps to recruit it to the initiation complex in collaboration with TFIIB. In Homo sapiens (Human), this protein is General transcription factor IIF subunit 2 (GTF2F2).